Reading from the N-terminus, the 158-residue chain is Disease resistance response protein Pi49 (158 aa).

Belongs to the BetVI family.

This Pisum sativum (Garden pea) protein is Disease resistance response protein Pi49 (DRR49A).